The sequence spans 407 residues: E3 ubiquitin-protein ligase TRIM13 (407 aa).

The segment at Cys10–Arg58 adopts an RING-type zinc-finger fold. The segment at Pro89–Ile131 adopts a B box-type zinc-finger fold. Zn(2+) is bound by residues Cys94, His97, Cys117, and His123. The stretch at Leu172–Ile200 forms a coiled coil. The chain crosses the membrane as a helical span at residues Leu316–Leu336.

As to quaternary structure, interacts (via C-terminal domain) with VCP. Interacts with AKT1; the interaction ubiquitinates AKT1 and leads to its proteasomal degradation. Interacts with MDM2; the interaction ubiquitinates AKT1 and leads to its proteasomal degradation. Interacts with p62/SQSTM1. Interacts with TRAF6. Interacts with IKBKG/NEMO. Post-translationally, auto-ubiquitinated; requires the RING-type zinc finger. Auto-polyubiquitination leads to proteasomal degradation.

The protein localises to the endoplasmic reticulum membrane. It carries out the reaction S-ubiquitinyl-[E2 ubiquitin-conjugating enzyme]-L-cysteine + [acceptor protein]-L-lysine = [E2 ubiquitin-conjugating enzyme]-L-cysteine + N(6)-ubiquitinyl-[acceptor protein]-L-lysine.. It functions in the pathway protein modification; protein ubiquitination. Functionally, endoplasmic reticulum (ER) membrane anchored E3 ligase involved in the retrotranslocation and turnover of membrane and secretory proteins from the ER through a set of processes named ER-associated degradation (ERAD). This process acts on misfolded proteins as well as in the regulated degradation of correctly folded proteins. Enhances ionizing radiation-induced p53/TP53 stability and apoptosis via ubiquitinating MDM2 and AKT1 and decreasing AKT1 kinase activity through MDM2 and AKT1 proteasomal degradation. Regulates ER stress-induced autophagy, and may act as a tumor suppressor. Also plays a role in innate immune response by stimulating NF-kappa-B activity in the TLR2 signaling pathway. Ubiquitinates TRAF6 via the 'Lys-29'-linked polyubiquitination chain resulting in NF-kappa-B activation. Participates as well in T-cell receptor-mediated NF-kappa-B activation. In the presence of TNF, modulates the IKK complex by regulating IKBKG/NEMO ubiquitination leading to the repression of NF-kappa-B. The sequence is that of E3 ubiquitin-protein ligase TRIM13 (Trim13) from Rattus norvegicus (Rat).